The following is a 186-amino-acid chain: UPF0200 protein Hbut_0338 (186 aa).

13 to 20 (GMPGSGKS) is an ATP binding site.

It belongs to the UPF0200 family.

In Hyperthermus butylicus (strain DSM 5456 / JCM 9403 / PLM1-5), this protein is UPF0200 protein Hbut_0338.